The sequence spans 693 residues: Bacterial dynamin-like protein (693 aa).

Topologically, residues 1-521 (MVNQVATDRF…DNSPGWAKWA (521 aa)) are cytoplasmic. The 248-residue stretch at 66–313 (QQGVFRLLVL…QADLDGTGFP (248 aa)) folds into the Dynamin-type G domain. The interval 76–83 (GDMKRGKS) is G1 motif. 79–84 (KRGKST) serves as a coordination point for GTP. The tract at residues 102–103 (CT) is G2 motif. Residues 180–183 (DSPG) are G3 motif. 235 to 241 (FLVNAWD) contributes to the GTP binding site. Residues 238 to 241 (NAWD) are G4 motif. Residue Asn-268 is a region of interest, G5 motif. Residue 292–293 (SI) participates in GTP binding. The middle domain stretch occupies residues 311-571 (GFPKFMDSLN…TAVTGILLGP (261 aa)). A coiled-coil region spans residues 347 to 378 (REAVARRIPLLEQDVNELKKRIDSVEPEFNKL). An intramembrane segment occupies 522–574 (MGLLSLSKGNLAGFALAGAGFDWKNILLNYFTVIGIGGIITAVTGILLGPIGF). A paddle domain region spans residues 572-606 (IGFALLGLGVGFLQADQARRELVKTAKKELVKHLP). At 575–693 (ALLGLGVGFL…AYSNLLAYYS (119 aa)) the chain is on the cytoplasmic side. The tract at residues 607 to 693 (QVAHEQSQVV…AYSNLLAYYS (87 aa)) is GED. A coiled-coil region spans residues 661 to 688 (ESEFNRLKNLQEDVIAQLQKIEAAYSNL).

This sequence belongs to the TRAFAC class dynamin-like GTPase superfamily. Dynamin/Fzo/YdjA family. Mitofusin subfamily. As to quaternary structure, homodimer. Self-assembles in the presence of GMP-PNP and liposomes, and probably also in the presence of GTP.

It is found in the cell inner membrane. The catalysed reaction is GTP + H2O = GDP + phosphate + H(+). Its function is as follows. Dynamin-related GTPase probably involved in membrane remodeling. Lipid and nucleotide-binding are thought to induce a large intramolecular rearrangement, leading to assembly on lipid bilayers and possible membrane curving. In the presence of the non-hydrolyzable GTP analog GMP-PNP self-assembles on a lipid bilayer; this does not stimulate subsequent GTPase activity. Does not bind lipids in the presence of GDP; perhaps GTP hydrolysis disrupts membrane-binding. This Nostoc punctiforme (strain ATCC 29133 / PCC 73102) protein is Bacterial dynamin-like protein.